Consider the following 205-residue polypeptide: MIKVALPKGRIANESLALFERLYGSKFVFDDRKLILEHQGFIFMLVRSQDVPTYVIHQAVDIGIVGLDVIEEQQANVVKLLNLGIGKCKVVVGSELGKSIDYQKPQLKIATKMPHITRKYFSNKAISIEALKLYGSIELAPLVGLSDAIVDIVETGVTMKQNNLKIDEVIMESSAYLIANKNSFYEKKELILALYERLKSTLDSK.

It belongs to the ATP phosphoribosyltransferase family. Short subfamily. Heteromultimer composed of HisG and HisZ subunits.

The protein resides in the cytoplasm. It catalyses the reaction 1-(5-phospho-beta-D-ribosyl)-ATP + diphosphate = 5-phospho-alpha-D-ribose 1-diphosphate + ATP. It participates in amino-acid biosynthesis; L-histidine biosynthesis; L-histidine from 5-phospho-alpha-D-ribose 1-diphosphate: step 1/9. In terms of biological role, catalyzes the condensation of ATP and 5-phosphoribose 1-diphosphate to form N'-(5'-phosphoribosyl)-ATP (PR-ATP). Has a crucial role in the pathway because the rate of histidine biosynthesis seems to be controlled primarily by regulation of HisG enzymatic activity. The protein is ATP phosphoribosyltransferase of Helicobacter hepaticus (strain ATCC 51449 / 3B1).